The sequence spans 334 residues: Fructose-1,6-bisphosphatase class 1 (334 aa).

The Mg(2+) site is built by glutamate 89, aspartate 112, leucine 114, and aspartate 115. Substrate is bound by residues 115–118 (DGSS), asparagine 208, tyrosine 241, 259–261 (YLY), and lysine 271. Glutamate 277 contacts Mg(2+).

Belongs to the FBPase class 1 family. Homotetramer. Mg(2+) is required as a cofactor.

Its subcellular location is the cytoplasm. It catalyses the reaction beta-D-fructose 1,6-bisphosphate + H2O = beta-D-fructose 6-phosphate + phosphate. Its pathway is carbohydrate biosynthesis; gluconeogenesis. The polypeptide is Fructose-1,6-bisphosphatase class 1 (Pectobacterium atrosepticum (strain SCRI 1043 / ATCC BAA-672) (Erwinia carotovora subsp. atroseptica)).